The primary structure comprises 169 residues: Co-chaperone protein HscB homolog (169 aa).

The J domain occupies 2–74; that stretch reads NYFDLFSLPV…CLRAQYLLLL (73 aa).

The protein belongs to the HscB family. In terms of assembly, interacts with HscA and stimulates its ATPase activity.

Functionally, co-chaperone involved in the maturation of iron-sulfur cluster-containing proteins. Seems to help targeting proteins to be folded toward HscA. The sequence is that of Co-chaperone protein HscB homolog from Psychromonas ingrahamii (strain DSM 17664 / CCUG 51855 / 37).